The chain runs to 293 residues: Probable tRNA-splicing endonuclease subunit Sen2 (293 aa).

Residues Y157, H165, and K204 contribute to the active site. The chain crosses the membrane as a helical span at residues 267-287 (VVFNHWGVILGFTVLSGLLVY).

It belongs to the tRNA-intron endonuclease family. In terms of assembly, tRNA splicing endonuclease is a heterotetramer composed of SEN2, SEN15, SEN34/LENG5 and SEN54.

It localises to the nucleus. Its subcellular location is the membrane. The catalysed reaction is pretRNA = a 3'-half-tRNA molecule with a 5'-OH end + a 5'-half-tRNA molecule with a 2',3'-cyclic phosphate end + an intron with a 2',3'-cyclic phosphate and a 5'-hydroxyl terminus.. Constitutes one of the two catalytic subunit of the tRNA-splicing endonuclease complex, a complex responsible for identification and cleavage of the splice sites in pre-tRNA. It cleaves pre-tRNA at the 5'- and 3'-splice sites to release the intron. The products are an intron and two tRNA half-molecules bearing 2',3'-cyclic phosphate and 5'-OH termini. There are no conserved sequences at the splice sites, but the intron is invariably located at the same site in the gene, placing the splice sites an invariant distance from the constant structural features of the tRNA body. Probably carries the active site for 5'-splice site cleavage. The sequence is that of Probable tRNA-splicing endonuclease subunit Sen2 from Oryza sativa subsp. japonica (Rice).